We begin with the raw amino-acid sequence, 211 residues long: Dibenzothiophene metabolism operon protein DoxH (211 aa).

It functions in the pathway aromatic compound metabolism; naphthalene degradation. Its function is as follows. May be involved in the conversion of 2-hydroxy-4-(2'-oxo-3,5-cyclohexadienyl)-buta-2,4-dienoate to cis-O-hydroxybenzylidenepyruvate. DoxH and doxJ encode different enzymes that may have interchangeable functions. This Pseudomonas sp. (strain C18) protein is Dibenzothiophene metabolism operon protein DoxH (doxH).